The primary structure comprises 239 residues: Carboxy-S-adenosyl-L-methionine synthase (239 aa).

Residues Tyr35, 64–66 (GSS), 114–115 (DL), Asn129, and Arg196 each bind S-adenosyl-L-methionine.

Belongs to the class I-like SAM-binding methyltransferase superfamily. Cx-SAM synthase family. As to quaternary structure, homodimer.

It carries out the reaction prephenate + S-adenosyl-L-methionine = carboxy-S-adenosyl-L-methionine + 3-phenylpyruvate + H2O. Catalyzes the conversion of S-adenosyl-L-methionine (SAM) to carboxy-S-adenosyl-L-methionine (Cx-SAM). The sequence is that of Carboxy-S-adenosyl-L-methionine synthase from Helicobacter hepaticus (strain ATCC 51449 / 3B1).